The sequence spans 33 residues: Dermaseptin-H8 (33 aa).

Residue L33 is modified to Leucine amide.

As to expression, expressed by the skin glands.

The protein resides in the secreted. Has antimicrobial activity. This chain is Dermaseptin-H8, found in Pithecopus hypochondrialis (Orange-legged leaf frog).